Consider the following 187-residue polypeptide: Elongation factor P (187 aa).

Belongs to the elongation factor P family.

Its subcellular location is the cytoplasm. It participates in protein biosynthesis; polypeptide chain elongation. In terms of biological role, involved in peptide bond synthesis. Stimulates efficient translation and peptide-bond synthesis on native or reconstituted 70S ribosomes in vitro. Probably functions indirectly by altering the affinity of the ribosome for aminoacyl-tRNA, thus increasing their reactivity as acceptors for peptidyl transferase. This chain is Elongation factor P, found in Parvibaculum lavamentivorans (strain DS-1 / DSM 13023 / NCIMB 13966).